The following is a 342-amino-acid chain: N-acetyl-gamma-glutamyl-phosphate reductase (342 aa).

C149 is a catalytic residue.

Belongs to the NAGSA dehydrogenase family. Type 1 subfamily.

The protein localises to the cytoplasm. It carries out the reaction N-acetyl-L-glutamate 5-semialdehyde + phosphate + NADP(+) = N-acetyl-L-glutamyl 5-phosphate + NADPH + H(+). The protein operates within amino-acid biosynthesis; L-arginine biosynthesis; N(2)-acetyl-L-ornithine from L-glutamate: step 3/4. Its function is as follows. Catalyzes the NADPH-dependent reduction of N-acetyl-5-glutamyl phosphate to yield N-acetyl-L-glutamate 5-semialdehyde. The protein is N-acetyl-gamma-glutamyl-phosphate reductase of Paracoccus denitrificans (strain Pd 1222).